A 670-amino-acid chain; its full sequence is Methionine--tRNA ligase (670 aa).

A 'HIGH' region motif is present at residues 14-24 (PYANGHLHLGH). Positions 145, 148, 158, and 161 each coordinate Zn(2+). The 'KMSKS' region motif lies at 330–334 (KMSKS). ATP is bound at residue Lys333. In terms of domain architecture, tRNA-binding spans 570–670 (DFAKVDLRIA…AGAFPGMKVK (101 aa)).

Belongs to the class-I aminoacyl-tRNA synthetase family. MetG type 1 subfamily. Homodimer. The cofactor is Zn(2+).

Its subcellular location is the cytoplasm. The catalysed reaction is tRNA(Met) + L-methionine + ATP = L-methionyl-tRNA(Met) + AMP + diphosphate. Functionally, is required not only for elongation of protein synthesis but also for the initiation of all mRNA translation through initiator tRNA(fMet) aminoacylation. In Legionella pneumophila (strain Corby), this protein is Methionine--tRNA ligase.